A 61-amino-acid chain; its full sequence is KICYNQPSSQHPTTKACPGEKNCYRKQWSDHRGTIIERGCGCPTVKPGVKLHCCTTEKCNN.

4 disulfide bridges follow: Cys3/Cys23, Cys17/Cys40, Cys42/Cys53, and Cys54/Cys59.

Belongs to the three-finger toxin family. Short-chain subfamily. Type I alpha-neurotoxin sub-subfamily. Expressed by the venom gland.

It is found in the secreted. In terms of biological role, binds to muscle nicotinic acetylcholine receptor (nAChR) and inhibit acetylcholine from binding to the receptor, thereby impairing neuromuscular transmission. The protein is Short neurotoxin 1 of Naja annulata annulata (Banded water cobra).